Reading from the N-terminus, the 264-residue chain is Thymidylate synthase (264 aa).

DUMP contacts are provided by residues Arg21 and 126-127; that span reads RR. Residue Cys146 is the Nucleophile of the active site. DUMP is bound by residues 166-169, Asn177, and 207-209; these read RSAD and HLY. Residue Asp169 coordinates (6R)-5,10-methylene-5,6,7,8-tetrahydrofolate. Ala263 contributes to the (6R)-5,10-methylene-5,6,7,8-tetrahydrofolate binding site.

This sequence belongs to the thymidylate synthase family. Bacterial-type ThyA subfamily. Homodimer.

The protein localises to the cytoplasm. The catalysed reaction is dUMP + (6R)-5,10-methylene-5,6,7,8-tetrahydrofolate = 7,8-dihydrofolate + dTMP. It functions in the pathway pyrimidine metabolism; dTTP biosynthesis. In terms of biological role, catalyzes the reductive methylation of 2'-deoxyuridine-5'-monophosphate (dUMP) to 2'-deoxythymidine-5'-monophosphate (dTMP) while utilizing 5,10-methylenetetrahydrofolate (mTHF) as the methyl donor and reductant in the reaction, yielding dihydrofolate (DHF) as a by-product. This enzymatic reaction provides an intracellular de novo source of dTMP, an essential precursor for DNA biosynthesis. This chain is Thymidylate synthase, found in Bradyrhizobium diazoefficiens (strain JCM 10833 / BCRC 13528 / IAM 13628 / NBRC 14792 / USDA 110).